Consider the following 1170-residue polypeptide: RNA-binding protein 33 (1170 aa).

Disordered stretches follow at residues M1–E152 and K199–K221. A2 is subject to N-acetylalanine. Residues Q20 to D36 are compositionally biased toward basic and acidic residues. Over residues E37 to G49 the composition is skewed to acidic residues. S41 is subject to Phosphoserine. The span at F82–N108 shows a compositional bias: polar residues. Acidic residues-rich tracts occupy residues G112 to E126 and E203 to E214. S205 and S233 each carry phosphoserine. 4 disordered regions span residues F259–L708, M721–D784, Q833–G863, and A942–G1050. A compositionally biased stretch (basic residues) spans K267–R278. Residues G289–P306 are compositionally biased toward basic and acidic residues. A compositionally biased stretch (pro residues) spans T311–Q329. 3 stretches are compositionally biased toward low complexity: residues L335–Q348, Q357–M372, and T394–L403. The segment covering F419–V433 has biased composition (pro residues). R470 bears the Asymmetric dimethylarginine mark. 3 stretches are compositionally biased toward pro residues: residues S481–T490, F554–P568, and L582–P630. The segment covering Q632–L642 has biased composition (basic residues). Composition is skewed to polar residues over residues Q662–L708 and M721–A732. Residues S741 and S765 each carry the phosphoserine modification. Positions L789–Y835 form a coiled coil. Residue S951 is modified to Phosphoserine. K960 participates in a covalent cross-link: Glycyl lysine isopeptide (Lys-Gly) (interchain with G-Cter in SUMO2). Phosphoserine is present on residues S973 and S991. R1028 carries the asymmetric dimethylarginine; alternate modification. R1028 carries the omega-N-methylarginine; alternate modification. Residues C1098 to E1170 form the RRM domain.

Associates with the NXF1-NXT1 RNA export complex. Interacts with ALKBH5; facilitating ALKBH5 recruitment to m6A-containing transcripts. Interacts with SENP1; promoting ALKBH5 deSUMOylation and subsequent activation.

It localises to the nucleus. Its subcellular location is the cytoplasm. Its function is as follows. RNA reader protein, which recognizes and binds specific RNAs, thereby regulating RNA metabolic processes, such as mRNA export, mRNA stability and/or translation. Binds a subset of intronless RNAs containing GC-rich elements, such as NORAD, and promotes their nuclear export by recruiting target RNAs to components of the NXF1-NXT1 RNA export machinery. Specifically recognizes and binds N6-methyladenosine (m6A)-containing mRNAs, promoting their demethylation by ALKBH5. Acts as an molecular adapter, which (1) promotes ALKBH5 recruitment to m6A-containing transcripts and (2) activates ALKBH5 demethylase activity by recruiting SENP1, leading to ALKBH5 deSUMOylation and subsequent activation. The chain is RNA-binding protein 33 from Homo sapiens (Human).